We begin with the raw amino-acid sequence, 150 residues long: Large ribosomal subunit protein bL9 (150 aa).

The protein belongs to the bacterial ribosomal protein bL9 family.

Its function is as follows. Binds to the 23S rRNA. The sequence is that of Large ribosomal subunit protein bL9 from Corynebacterium kroppenstedtii (strain DSM 44385 / JCM 11950 / CIP 105744 / CCUG 35717).